Here is a 393-residue protein sequence, read N- to C-terminus: Staphopain B (393 aa).

The signal sequence occupies residues 1 to 36 (MNSSYKSRVFNIISIIMVSMLILSLGAFANNNKAKA). Positions 37 to 219 (DSHSKQLEIN…KVEENEAIQE (183 aa)) are excised as a propeptide. Active-site residues include cysteine 243, histidine 340, and asparagine 360.

This sequence belongs to the peptidase C47 family. In the cytoplasm, prematurely activated/folded SspB forms a stable non-covalent complex with SspC. In terms of processing, proteolytically cleaved by staphylococcal serine protease (SspA).

It is found in the secreted. Its activity is regulated as follows. Prematurely activated/folded staphopain B is inhibited by staphostatin B (SspC), which is probably required to protect staphylococcal cytoplasmic proteins from degradation by SspB. Its function is as follows. Cysteine protease that plays an important role in the inhibition of host innate immune response. Degrades host elastin, fibrogen, fibronectin and kininogen. Blocks phagocytosis of opsonised S.aureus by neutrophils and monocytes by inducing their death in a proteolytic activity-dependent manner. Decreases surface expression of the 'don't eat me' signal CD31 on neutrophils. Cleaves host galectin-3/LGALS3, thereby inhibiting the neutrophil-activating ability of the lectin. The protein is Staphopain B (sspB) of Staphylococcus aureus (strain Mu50 / ATCC 700699).